Consider the following 230-residue polypeptide: MTSVLELKATARPKSGKGAARAERRAGRVPGVIYGDNQSPLPISVEEKELRLRILAGRFLTTVFDVVLDGKKHRVIPRDYHLDPVRDFPIHVDFLRLGAGATIRVSVPLHLKGLEVAPGVKRGGTFNIVTHTVELEAPAENIPQFIEADVSTLDIGVSLHLSDIALPTGVKSVSRDDVTLVTIVPPSGYNEDKAAAGAAPAAAAAPAAAAKAPAAAAKAPAAAAPAAKKK.

The protein belongs to the bacterial ribosomal protein bL25 family. CTC subfamily. As to quaternary structure, part of the 50S ribosomal subunit; part of the 5S rRNA/L5/L18/L25 subcomplex. Contacts the 5S rRNA. Binds to the 5S rRNA independently of L5 and L18.

This is one of the proteins that binds to the 5S RNA in the ribosome where it forms part of the central protuberance. This chain is Large ribosomal subunit protein bL25 (rplY), found in Rhodopseudomonas palustris (strain ATCC BAA-98 / CGA009).